A 391-amino-acid chain; its full sequence is Phosphoglycerate kinase (391 aa).

Residues Asp23–Asn25, Arg38, His61–Lys64, Arg117, and Arg150 each bind substrate. ATP is bound by residues Lys201, Gly291, Glu322, and Gly348–Ser351.

The protein belongs to the phosphoglycerate kinase family. In terms of assembly, monomer.

The protein localises to the cytoplasm. It catalyses the reaction (2R)-3-phosphoglycerate + ATP = (2R)-3-phospho-glyceroyl phosphate + ADP. Its pathway is carbohydrate degradation; glycolysis; pyruvate from D-glyceraldehyde 3-phosphate: step 2/5. This is Phosphoglycerate kinase from Clostridium beijerinckii (strain ATCC 51743 / NCIMB 8052) (Clostridium acetobutylicum).